A 266-amino-acid chain; its full sequence is Glucosamine-6-phosphate deaminase (266 aa).

Aspartate 72 acts as the Proton acceptor; for enolization step in catalysis. Aspartate 141 acts as the For ring-opening step in catalysis. Histidine 143 acts as the Proton acceptor; for ring-opening step in catalysis. Glutamate 148 serves as the catalytic For ring-opening step.

This sequence belongs to the glucosamine/galactosamine-6-phosphate isomerase family. NagB subfamily. In terms of assembly, homohexamer.

It carries out the reaction alpha-D-glucosamine 6-phosphate + H2O = beta-D-fructose 6-phosphate + NH4(+). Its pathway is amino-sugar metabolism; N-acetylneuraminate degradation; D-fructose 6-phosphate from N-acetylneuraminate: step 5/5. Allosterically activated by N-acetylglucosamine 6-phosphate (GlcNAc6P). Functionally, catalyzes the reversible isomerization-deamination of glucosamine 6-phosphate (GlcN6P) to form fructose 6-phosphate (Fru6P) and ammonium ion. The sequence is that of Glucosamine-6-phosphate deaminase from Erwinia tasmaniensis (strain DSM 17950 / CFBP 7177 / CIP 109463 / NCPPB 4357 / Et1/99).